A 185-amino-acid chain; its full sequence is ATP synthase subunit b, chloroplastic (185 aa).

Residues 31–49 (LINSGVVLGLPVYSGKGVL) traverse the membrane as a helical segment.

This sequence belongs to the ATPase B chain family. As to quaternary structure, F-type ATPases have 2 components, F(1) - the catalytic core - and F(0) - the membrane proton channel. F(1) has five subunits: alpha(3), beta(3), gamma(1), delta(1), epsilon(1). F(0) has four main subunits: a(1), b(1), b'(1) and c(10-14). The alpha and beta chains form an alternating ring which encloses part of the gamma chain. F(1) is attached to F(0) by a central stalk formed by the gamma and epsilon chains, while a peripheral stalk is formed by the delta, b and b' chains.

It localises to the plastid. It is found in the chloroplast thylakoid membrane. Functionally, f(1)F(0) ATP synthase produces ATP from ADP in the presence of a proton or sodium gradient. F-type ATPases consist of two structural domains, F(1) containing the extramembraneous catalytic core and F(0) containing the membrane proton channel, linked together by a central stalk and a peripheral stalk. During catalysis, ATP synthesis in the catalytic domain of F(1) is coupled via a rotary mechanism of the central stalk subunits to proton translocation. Its function is as follows. Component of the F(0) channel, it forms part of the peripheral stalk, linking F(1) to F(0). The protein is ATP synthase subunit b, chloroplastic of Huperzia lucidula (Shining clubmoss).